The sequence spans 233 residues: Antilisterial bacteriocin subtilosin biosynthesis protein AlbG (233 aa).

6 helical membrane-spanning segments follow: residues 7 to 27 (FTLLLLLIGMAAYSFGWVQAV), 46 to 66 (GLLACTAALLMLPAFLYLHYV), 116 to 136 (TYVMAAVLCQVIIFGCMFEIV), 145 to 165 (TPPAFSMGLAMLLILYLLFCM), 176 to 198 (GSLFRKVFAGALAAAGIWWMLSF), and 203 to 220 (LLFLIILAAIQQIGSFIY).

It is found in the cell membrane. Its function is as follows. Involved in the production of the bacteriocin subtilosin. This is Antilisterial bacteriocin subtilosin biosynthesis protein AlbG (albG) from Bacillus subtilis (strain 168).